A 99-amino-acid chain; its full sequence is NADH-quinone oxidoreductase subunit K (99 aa).

3 helical membrane-spanning segments follow: residues 3–23, 28–48, and 59–79; these read PDNY…GVML, IVVF…FVTF, and VIAF…LGII.

This sequence belongs to the complex I subunit 4L family. In terms of assembly, NDH-1 is composed of 14 different subunits. Subunits NuoA, H, J, K, L, M, N constitute the membrane sector of the complex.

The protein localises to the cell membrane. It carries out the reaction a quinone + NADH + 5 H(+)(in) = a quinol + NAD(+) + 4 H(+)(out). Its function is as follows. NDH-1 shuttles electrons from NADH, via FMN and iron-sulfur (Fe-S) centers, to quinones in the respiratory chain. The immediate electron acceptor for the enzyme in this species is believed to be a menaquinone. Couples the redox reaction to proton translocation (for every two electrons transferred, four hydrogen ions are translocated across the cytoplasmic membrane), and thus conserves the redox energy in a proton gradient. The polypeptide is NADH-quinone oxidoreductase subunit K (Mycobacteroides abscessus (strain ATCC 19977 / DSM 44196 / CCUG 20993 / CIP 104536 / JCM 13569 / NCTC 13031 / TMC 1543 / L948) (Mycobacterium abscessus)).